A 369-amino-acid polypeptide reads, in one-letter code: tRNA pseudouridine synthase D (369 aa).

Asp-80 serves as the catalytic Nucleophile. The TRUD domain maps to 156–318 (GIPNWFGEQR…LKQERRALRL (163 aa)).

Belongs to the pseudouridine synthase TruD family.

It catalyses the reaction uridine(13) in tRNA = pseudouridine(13) in tRNA. Responsible for synthesis of pseudouridine from uracil-13 in transfer RNAs. This chain is tRNA pseudouridine synthase D, found in Xanthomonas axonopodis pv. citri (strain 306).